Consider the following 511-residue polypeptide: Activin receptor type-2B (511 aa).

The signal sequence occupies residues 1-20 (MGASVALTFLLLLATFRAGS). The Extracellular segment spans residues 21–136 (GHDEVETREC…KPQPSASVLN (116 aa)). Cys30 and Cys61 are disulfide-bonded. Asn43 and Asn67 each carry an N-linked (GlcNAc...) asparagine glycan. 3 disulfide bridges follow: Cys86-Cys105, Cys92-Cys104, and Cys106-Cys111. The helical transmembrane segment at 137–157 (ILIYSLLPIVGLSMAILLAFW) threads the bilayer. Over 158–511 (MYRHRKPSYG…VDLPPKESSI (354 aa)) the chain is Cytoplasmic. In terms of domain architecture, Protein kinase spans 189 to 477 (LQLLDIKARG…LSAGCVEERI (289 aa)). Residues 195–203 (KARGRFGCV) and Lys216 each bind ATP. Catalysis depends on Asp320, which acts as the Proton acceptor.

Belongs to the protein kinase superfamily. TKL Ser/Thr protein kinase family. TGFB receptor subfamily.

It localises to the membrane. It carries out the reaction L-threonyl-[receptor-protein] + ATP = O-phospho-L-threonyl-[receptor-protein] + ADP + H(+). It catalyses the reaction L-seryl-[receptor-protein] + ATP = O-phospho-L-seryl-[receptor-protein] + ADP + H(+). Receptor for activin A, activin B and inhibin A. Involved in transmembrane signaling. The chain is Activin receptor type-2B (acvr2b) from Xenopus laevis (African clawed frog).